We begin with the raw amino-acid sequence, 480 residues long: Acyl-coenzyme A synthetase ACSM6, mitochondrial (480 aa).

The transit peptide at 1–21 (MLGRFQPFSLVRSFRLGFEAC) directs the protein to the mitochondrion. ATP is bound by residues 226 to 234 (TKGTTGAPK), 366 to 371 (EGYGQT), Asp-453, and Arg-468.

This sequence belongs to the ATP-dependent AMP-binding enzyme family. As to quaternary structure, monomer. Requires Mg(2+) as cofactor. It depends on Mn(2+) as a cofactor.

The protein resides in the mitochondrion. The catalysed reaction is a medium-chain fatty acid + ATP + CoA = a medium-chain fatty acyl-CoA + AMP + diphosphate. Its function is as follows. Catalyzes the activation of fatty acids by CoA to produce an acyl-CoA, the first step in fatty acid metabolism. The polypeptide is Acyl-coenzyme A synthetase ACSM6, mitochondrial (ACSM6) (Homo sapiens (Human)).